A 472-amino-acid chain; its full sequence is Glutamate--tRNA ligase 1 (472 aa).

The short motif at 9 to 19 is the 'HIGH' region element; that stretch reads PSPTGLLHVGN. Residues 112 to 131 are compositionally biased toward basic and acidic residues; it reads AMAEKRPPRYDGTWRDRDPS. The segment at 112–133 is disordered; the sequence is AMAEKRPPRYDGTWRDRDPSEA. Positions 238–242 match the 'KMSKS' region motif; the sequence is KLSKR. An ATP-binding site is contributed by Lys-241.

The protein belongs to the class-I aminoacyl-tRNA synthetase family. Glutamate--tRNA ligase type 1 subfamily. As to quaternary structure, monomer.

The protein resides in the cytoplasm. The catalysed reaction is tRNA(Glu) + L-glutamate + ATP = L-glutamyl-tRNA(Glu) + AMP + diphosphate. Functionally, catalyzes the attachment of glutamate to tRNA(Glu) in a two-step reaction: glutamate is first activated by ATP to form Glu-AMP and then transferred to the acceptor end of tRNA(Glu). This is Glutamate--tRNA ligase 1 from Gluconobacter oxydans (strain 621H) (Gluconobacter suboxydans).